A 413-amino-acid polypeptide reads, in one-letter code: Multifunctional CCA protein (413 aa).

2 residues coordinate ATP: Gly8 and Arg11. The CTP site is built by Gly8 and Arg11. The Mg(2+) site is built by Asp21 and Asp23. ATP contacts are provided by Arg91, Arg143, and Arg146. Positions 91, 143, and 146 each coordinate CTP. Residues 232–333 (TGVHVMMVVD…VRFFERSDAL (102 aa)) enclose the HD domain.

The protein belongs to the tRNA nucleotidyltransferase/poly(A) polymerase family. Bacterial CCA-adding enzyme type 1 subfamily. In terms of assembly, monomer. Can also form homodimers and oligomers. Mg(2+) is required as a cofactor. Ni(2+) serves as cofactor.

It carries out the reaction a tRNA precursor + 2 CTP + ATP = a tRNA with a 3' CCA end + 3 diphosphate. The catalysed reaction is a tRNA with a 3' CCA end + 2 CTP + ATP = a tRNA with a 3' CCACCA end + 3 diphosphate. In terms of biological role, catalyzes the addition and repair of the essential 3'-terminal CCA sequence in tRNAs without using a nucleic acid template. Adds these three nucleotides in the order of C, C, and A to the tRNA nucleotide-73, using CTP and ATP as substrates and producing inorganic pyrophosphate. tRNA 3'-terminal CCA addition is required both for tRNA processing and repair. Also involved in tRNA surveillance by mediating tandem CCA addition to generate a CCACCA at the 3' terminus of unstable tRNAs. While stable tRNAs receive only 3'-terminal CCA, unstable tRNAs are marked with CCACCA and rapidly degraded. This Burkholderia ambifaria (strain ATCC BAA-244 / DSM 16087 / CCUG 44356 / LMG 19182 / AMMD) (Burkholderia cepacia (strain AMMD)) protein is Multifunctional CCA protein.